We begin with the raw amino-acid sequence, 131 residues long: MAKASSRGGGKKKVKRTVSDGVAHINATFNNTLITITDRQGNALSWASAGGSGFKGSRKSTPFAAQVASETAARAAQDYGLKNVEVRVKGPGPGRESAVRALNAVGYRITNISDVSPIPHNGCRPPKKRRV.

Belongs to the universal ribosomal protein uS11 family. In terms of assembly, part of the 30S ribosomal subunit. Interacts with proteins S7 and S18. Binds to IF-3.

Located on the platform of the 30S subunit, it bridges several disparate RNA helices of the 16S rRNA. Forms part of the Shine-Dalgarno cleft in the 70S ribosome. The sequence is that of Small ribosomal subunit protein uS11 from Halorhodospira halophila (strain DSM 244 / SL1) (Ectothiorhodospira halophila (strain DSM 244 / SL1)).